The primary structure comprises 59 residues: Large ribosomal subunit protein uL30 (59 aa).

This sequence belongs to the universal ribosomal protein uL30 family. Part of the 50S ribosomal subunit.

The sequence is that of Large ribosomal subunit protein uL30 from Leptospira interrogans serogroup Icterohaemorrhagiae serovar copenhageni (strain Fiocruz L1-130).